A 617-amino-acid polypeptide reads, in one-letter code: 1-deoxy-D-xylulose-5-phosphate synthase (617 aa).

Thiamine diphosphate is bound by residues His-80 and 121 to 123 (GHS). Residue Asp-152 coordinates Mg(2+). Thiamine diphosphate is bound by residues 153 to 154 (GA), Asn-181, Tyr-277, and Glu-360. Asn-181 contributes to the Mg(2+) binding site.

It belongs to the transketolase family. DXPS subfamily. As to quaternary structure, homodimer. Requires Mg(2+) as cofactor. Thiamine diphosphate is required as a cofactor.

The enzyme catalyses D-glyceraldehyde 3-phosphate + pyruvate + H(+) = 1-deoxy-D-xylulose 5-phosphate + CO2. Its pathway is metabolic intermediate biosynthesis; 1-deoxy-D-xylulose 5-phosphate biosynthesis; 1-deoxy-D-xylulose 5-phosphate from D-glyceraldehyde 3-phosphate and pyruvate: step 1/1. In terms of biological role, catalyzes the acyloin condensation reaction between C atoms 2 and 3 of pyruvate and glyceraldehyde 3-phosphate to yield 1-deoxy-D-xylulose-5-phosphate (DXP). The chain is 1-deoxy-D-xylulose-5-phosphate synthase from Blochmanniella floridana.